Here is a 430-residue protein sequence, read N- to C-terminus: FAD-dependent monooxygenase asL4 (430 aa).

Residues glycine 11 to alanine 14, glutamate 33 to arginine 34, arginine 108, and tyrosine 278 contribute to the FAD site.

This sequence belongs to the aromatic-ring hydroxylase family. Requires FAD as cofactor.

It functions in the pathway secondary metabolite biosynthesis; terpenoid biosynthesis. Functionally, flavin-dependent monooxygenase; part of the gene cluster that mediates the biosynthesis of xenovulene A, an unusual meroterpenoid that has potent inhibitory effects on the human gamma-aminobutyrate A (GABAA) benzodiazepine receptor. The first step of xenovulene A biosynthesis is the biosynthesis of 3-methylorcinaldehyde performed by the non-reducing polyketide synthase aspks1. The salicylate hydroxylase asL1 then catalyzes the oxidative dearomatization of 3-methylorcinaldehyde to yield a dearomatized hydroxycyclohexadione. The 2-oxoglutarate-dependent dioxygenase asL3 further catalyzes the oxidative ring expansion to provide the first tropolone metabolite. The cytochrome P450 monooxygenase asR2 allows the synthesis of tropolone hemiacetal. In parallel, a previously unrecognised class of terpene cyclase, asR6, produces alpha-humulene from farnesylpyrophosphate (FPP). The putative Diels-Alderase asR5 probably catalyzes the formation of the tropolone-humulene skeleton by linking humulene and the polyketide moiety. Oxidative-ring contractions catalyzed by asL4 and asL6 then processively remove carbon atoms from the polyketide to yield xenovulene A. The chain is FAD-dependent monooxygenase asL4 from Sarocladium schorii (Acremonium strictum (strain IMI 501407)).